Consider the following 317-residue polypeptide: Transcriptional activator protein med (317 aa).

A signal peptide spans 1-17; the sequence is MITRLVMIFSVLLLLSG. Cys18 carries N-palmitoyl cysteine lipidation. Residue Cys18 is the site of S-diacylglycerol cysteine attachment.

The protein belongs to the BMP lipoprotein family.

It is found in the cell membrane. Positive activator of the comK gene. The protein is Transcriptional activator protein med (med) of Bacillus subtilis (strain 168).